Here is an 83-residue protein sequence, read N- to C-terminus: ATP synthase subunit 9, mitochondrial (83 aa).

The next 2 helical transmembrane spans lie at 8-28 and 45-72; these read IGAG…GNVL and SFGY…LISS.

The protein belongs to the ATPase C chain family. F-type ATPases have 2 components, CF(1) - the catalytic core - and CF(0) - the membrane proton channel. CF(1) has five subunits: alpha(3), beta(3), gamma(1), delta(1), epsilon(1). CF(0) has three main subunits: a, b and c.

Its subcellular location is the mitochondrion membrane. This protein is one of the chains of the nonenzymatic membrane component (F0) of mitochondrial ATPase. This is ATP synthase subunit 9, mitochondrial (ATP9) from Helianthus annuus (Common sunflower).